The following is a 102-amino-acid chain: Small ribosomal subunit protein uS10 (102 aa).

It belongs to the universal ribosomal protein uS10 family. Part of the 30S ribosomal subunit.

Functionally, involved in the binding of tRNA to the ribosomes. This chain is Small ribosomal subunit protein uS10, found in Dehalococcoides mccartyi (strain ATCC BAA-2100 / JCM 16839 / KCTC 5957 / BAV1).